Here is a 160-residue protein sequence, read N- to C-terminus: SsrA-binding protein (160 aa).

It belongs to the SmpB family.

Its subcellular location is the cytoplasm. In terms of biological role, required for rescue of stalled ribosomes mediated by trans-translation. Binds to transfer-messenger RNA (tmRNA), required for stable association of tmRNA with ribosomes. tmRNA and SmpB together mimic tRNA shape, replacing the anticodon stem-loop with SmpB. tmRNA is encoded by the ssrA gene; the 2 termini fold to resemble tRNA(Ala) and it encodes a 'tag peptide', a short internal open reading frame. During trans-translation Ala-aminoacylated tmRNA acts like a tRNA, entering the A-site of stalled ribosomes, displacing the stalled mRNA. The ribosome then switches to translate the ORF on the tmRNA; the nascent peptide is terminated with the 'tag peptide' encoded by the tmRNA and targeted for degradation. The ribosome is freed to recommence translation, which seems to be the essential function of trans-translation. The protein is SsrA-binding protein of Actinobacillus succinogenes (strain ATCC 55618 / DSM 22257 / CCUG 43843 / 130Z).